The following is a 523-amino-acid chain: Xanthotoxin 5-hydroxylase CYP82C2 (523 aa).

The chain crosses the membrane as a helical span at residues 1 to 21; that stretch reads MDTSLFSLFVPILVFVFIALF. Heme is bound at residue cysteine 462.

Belongs to the cytochrome P450 family. The cofactor is heme.

It is found in the membrane. The enzyme catalyses xanthotoxin + reduced [NADPH--hemoprotein reductase] + O2 = 5-hydroxyxanthotoxin + oxidized [NADPH--hemoprotein reductase] + H2O + 2 H(+). The catalysed reaction is indole-3-carbonyl nitrile + reduced [NADPH--hemoprotein reductase] + O2 = 4-hydroxy-indole-3-carbonyl nitrile + oxidized [NADPH--hemoprotein reductase] + H2O + H(+). Functionally, involved in the biosynthetic pathway to 4-hydroxyindole-3-carbonyl nitrile (4-OH-ICN), a cyanogenic metabolite required for inducible pathogen defense. Converts indole-3-carbonyl nitrile (ICN) into 4-OH-ICN. Can hydroxylate xanthotoxin (8-methoxypsoralen) to form 5-hydroxyxanthotoxin (5-hydroxy-8-methoxypsoralen) in vivo and in vitro. The polypeptide is Xanthotoxin 5-hydroxylase CYP82C2 (Arabidopsis thaliana (Mouse-ear cress)).